Reading from the N-terminus, the 59-residue chain is UPF0181 protein YoaH (59 aa).

It belongs to the UPF0181 family.

The chain is UPF0181 protein YoaH from Shigella flexneri serotype 5b (strain 8401).